The chain runs to 258 residues: Very-long-chain aldehyde decarbonylase GL1-9 (258 aa).

A run of 5 helical transmembrane segments spans residues 13–33, 63–83, 88–108, 149–169, and 175–195; these read MGTF…QLVL, GVLL…MVTS, VVVQ…MLVM, PLEG…VSGM, and VFFF…LWLP. Residues 101–237 enclose the Fatty acid hydroxylase domain; sequence FLVAMLVMDS…FSIWDRILGT (137 aa).

Belongs to the sterol desaturase family. In terms of assembly, homodimer.

The protein localises to the endoplasmic reticulum membrane. It carries out the reaction a long-chain fatty aldehyde + 2 NADPH + O2 + H(+) = a long-chain alkane + formate + 2 NADP(+) + H2O. Aldehyde decarbonylase involved in the conversion of aldehydes to alkanes. Core component of a very-long-chain alkane synthesis complex. The sequence is that of Very-long-chain aldehyde decarbonylase GL1-9 from Oryza sativa subsp. indica (Rice).